The following is a 235-amino-acid chain: Thiamine import ATP-binding protein ThiQ (235 aa).

In terms of domain architecture, ABC transporter spans Leu2–Ile230. Residue Gly32 to Ser39 participates in ATP binding.

The protein belongs to the ABC transporter superfamily. Thiamine importer (TC 3.A.1.19.1) family. In terms of assembly, the complex is composed of two ATP-binding proteins (ThiQ), two transmembrane proteins (ThiP) and a solute-binding protein (ThiB).

The protein resides in the cell inner membrane. The enzyme catalyses thiamine(out) + ATP + H2O = thiamine(in) + ADP + phosphate + H(+). Part of the ABC transporter complex ThiBPQ involved in thiamine import. Responsible for energy coupling to the transport system. Is also involved in thiamine pyrophosphate (TPP) transport. This chain is Thiamine import ATP-binding protein ThiQ, found in Salmonella typhimurium (strain LT2 / SGSC1412 / ATCC 700720).